A 307-amino-acid chain; its full sequence is Quinolinate synthase (307 aa).

2 residues coordinate iminosuccinate: histidine 23 and serine 40. Cysteine 86 provides a ligand contact to [4Fe-4S] cluster. Residues 112 to 114 (YVN) and serine 129 each bind iminosuccinate. [4Fe-4S] cluster is bound at residue cysteine 173. Residues 199–201 (HPE) and threonine 216 each bind iminosuccinate. Cysteine 265 serves as a coordination point for [4Fe-4S] cluster.

Belongs to the quinolinate synthase family. Type 2 subfamily. [4Fe-4S] cluster serves as cofactor.

The protein localises to the cytoplasm. The catalysed reaction is iminosuccinate + dihydroxyacetone phosphate = quinolinate + phosphate + 2 H2O + H(+). It functions in the pathway cofactor biosynthesis; NAD(+) biosynthesis; quinolinate from iminoaspartate: step 1/1. Functionally, catalyzes the condensation of iminoaspartate with dihydroxyacetone phosphate to form quinolinate. The chain is Quinolinate synthase from Methanocaldococcus jannaschii (strain ATCC 43067 / DSM 2661 / JAL-1 / JCM 10045 / NBRC 100440) (Methanococcus jannaschii).